Here is a 500-residue protein sequence, read N- to C-terminus: Glutamate decarboxylase 3 (500 aa).

The residue at position 8 (Ser8) is a Phosphoserine. N6-(pyridoxal phosphate)lysine is present on Lys277.

Belongs to the group II decarboxylase family. In terms of assembly, homohexamer. Interacts with calmodulin. It depends on pyridoxal 5'-phosphate as a cofactor. Expressed at low levels in siliques.

It catalyses the reaction L-glutamate + H(+) = 4-aminobutanoate + CO2. In terms of biological role, catalyzes the production of GABA. The calmodulin-binding is calcium-dependent and it is proposed that this may, directly or indirectly, form a calcium regulated control of GABA biosynthesis. This is Glutamate decarboxylase 3 (GAD3) from Arabidopsis thaliana (Mouse-ear cress).